The following is a 367-amino-acid chain: Glutamate 5-kinase (367 aa).

Position 9 (Lys-9) interacts with ATP. 3 residues coordinate substrate: Ser-49, Asp-136, and Asn-148. Residues Thr-168–Asp-169 and Thr-210–Lys-216 contribute to the ATP site. In terms of domain architecture, PUA spans Ser-276–Arg-350.

It belongs to the glutamate 5-kinase family.

The protein resides in the cytoplasm. The catalysed reaction is L-glutamate + ATP = L-glutamyl 5-phosphate + ADP. It functions in the pathway amino-acid biosynthesis; L-proline biosynthesis; L-glutamate 5-semialdehyde from L-glutamate: step 1/2. Catalyzes the transfer of a phosphate group to glutamate to form L-glutamate 5-phosphate. This Bacillus cereus (strain ZK / E33L) protein is Glutamate 5-kinase.